A 247-amino-acid polypeptide reads, in one-letter code: NAD-dependent protein deacetylase (247 aa).

Residues 1–247 (METFKSILHE…EFARSLGMKK (247 aa)) form the Deacetylase sirtuin-type domain. 8 residues coordinate NAD(+): Ala20, Thr24, Phe31, Arg32, Gln100, Ile102, Asp103, and His118. Phe31 serves as a coordination point for nicotinamide. Residues Ile102 and Asp103 each contribute to the nicotinamide site. His118 functions as the Proton acceptor in the catalytic mechanism. The Zn(2+) site is built by Cys126, Cys129, Cys146, and Cys156. Thr192, Ser193, Asn218, and Ile236 together coordinate NAD(+).

This sequence belongs to the sirtuin family. Class U subfamily. Zn(2+) is required as a cofactor.

Its subcellular location is the cytoplasm. The catalysed reaction is N(6)-acetyl-L-lysyl-[protein] + NAD(+) + H2O = 2''-O-acetyl-ADP-D-ribose + nicotinamide + L-lysyl-[protein]. Its function is as follows. NAD-dependent protein deacetylase which modulates the activities of several enzymes which are inactive in their acetylated form. The chain is NAD-dependent protein deacetylase from Bacillus subtilis (strain 168).